Here is a 152-residue protein sequence, read N- to C-terminus: D-aminoacyl-tRNA deacylase (152 aa).

A Gly-cisPro motif, important for rejection of L-amino acids motif is present at residues 137–138 (GP).

This sequence belongs to the DTD family. Homodimer.

Its subcellular location is the cytoplasm. It catalyses the reaction glycyl-tRNA(Ala) + H2O = tRNA(Ala) + glycine + H(+). The catalysed reaction is a D-aminoacyl-tRNA + H2O = a tRNA + a D-alpha-amino acid + H(+). In terms of biological role, an aminoacyl-tRNA editing enzyme that deacylates mischarged D-aminoacyl-tRNAs. Also deacylates mischarged glycyl-tRNA(Ala), protecting cells against glycine mischarging by AlaRS. Acts via tRNA-based rather than protein-based catalysis; rejects L-amino acids rather than detecting D-amino acids in the active site. By recycling D-aminoacyl-tRNA to D-amino acids and free tRNA molecules, this enzyme counteracts the toxicity associated with the formation of D-aminoacyl-tRNA entities in vivo and helps enforce protein L-homochirality. This chain is D-aminoacyl-tRNA deacylase, found in Methylibium petroleiphilum (strain ATCC BAA-1232 / LMG 22953 / PM1).